The sequence spans 101 residues: NADH-quinone oxidoreductase subunit K (101 aa).

3 helical membrane-spanning segments follow: residues 4 to 24 (LTHY…GIFL), 30 to 50 (IVLL…FIAF), and 61 to 81 (IFVF…LAIL).

Belongs to the complex I subunit 4L family. NDH-1 is composed of 14 different subunits. Subunits NuoA, H, J, K, L, M, N constitute the membrane sector of the complex.

The protein resides in the cell inner membrane. It catalyses the reaction a quinone + NADH + 5 H(+)(in) = a quinol + NAD(+) + 4 H(+)(out). Its function is as follows. NDH-1 shuttles electrons from NADH, via FMN and iron-sulfur (Fe-S) centers, to quinones in the respiratory chain. The immediate electron acceptor for the enzyme in this species is believed to be ubiquinone. Couples the redox reaction to proton translocation (for every two electrons transferred, four hydrogen ions are translocated across the cytoplasmic membrane), and thus conserves the redox energy in a proton gradient. The protein is NADH-quinone oxidoreductase subunit K of Laribacter hongkongensis (strain HLHK9).